Here is a 338-residue protein sequence, read N- to C-terminus: Taste receptor type 2 member 39 (338 aa).

Over 1–30 (MLGRCFPPDTKEKQQLRMTKLCDPAESELS) the chain is Extracellular. Residues 31 to 51 (PFLITLILAVLLAEYLIGIIA) form a helical membrane-spanning segment. Over 52–74 (NGFIMAIHAAEWVQNKAVSTSGR) the chain is Cytoplasmic. A helical membrane pass occupies residues 75-95 (ILVFLSVSRIALQSLMMLEIT). Residues 96 to 116 (ISSTSLSFYSEDAVYYAFKIS) are Extracellular-facing. A helical transmembrane segment spans residues 117 to 137 (FIFLNFCSLWFAAWLSFFYFV). Topologically, residues 138–156 (KIANFSYPLFLKLRWRITG) are cytoplasmic. Residues 157 to 177 (LIPWLLWLSVFISFSHSMFCI) form a helical membrane-spanning segment. Residues 178–205 (NIXTVYCNNSFPIHSSNSTKKTYLSEIN) are Extracellular-facing. N-linked (GlcNAc...) asparagine glycans are attached at residues Asn-185 and Asn-194. A helical membrane pass occupies residues 206–226 (VVGLAFFFNLGIVTPLIMFIL). Residues 227–262 (TATLLILSLKRHTLHMGSNATGSNDPSMEAHMGAIK) lie on the Cytoplasmic side of the membrane. A helical membrane pass occupies residues 263 to 283 (ATSYFLILYIFNAVALFIYLS). The Extracellular portion of the chain corresponds to 284–291 (NMFDINSL). A helical membrane pass occupies residues 292-312 (WNNLCQIIMAAYPASHSILLI). The Cytoplasmic portion of the chain corresponds to 313-338 (QDNPGLRRAWKRLQLRLHLYPKEWTL).

It belongs to the G-protein coupled receptor T2R family.

It is found in the membrane. Its function is as follows. Receptor that may play a role in the perception of bitterness and is gustducin-linked. May play a role in sensing the chemical composition of the gastrointestinal content. The activity of this receptor may stimulate alpha gustducin, mediate PLC-beta-2 activation and lead to the gating of TRPM5. This chain is Taste receptor type 2 member 39 (TAS2R39), found in Gorilla gorilla gorilla (Western lowland gorilla).